Reading from the N-terminus, the 448-residue chain is Putative F-box/LRR-repeat protein At3g44810 (448 aa).

The region spanning T6 to S54 is the F-box domain. LRR repeat units lie at residues V117 to S141, T143 to P165, C190 to K213, F228 to R251, V290 to G313, and I421 to L443.

The chain is Putative F-box/LRR-repeat protein At3g44810 from Arabidopsis thaliana (Mouse-ear cress).